The sequence spans 366 residues: tRNA pseudouridine synthase B (366 aa).

The active-site Nucleophile is the aspartate 44.

It belongs to the pseudouridine synthase TruB family. Type 1 subfamily.

The catalysed reaction is uridine(55) in tRNA = pseudouridine(55) in tRNA. Responsible for synthesis of pseudouridine from uracil-55 in the psi GC loop of transfer RNAs. This chain is tRNA pseudouridine synthase B, found in Treponema pallidum (strain Nichols).